The sequence spans 121 residues: Large ribosomal subunit protein uL18 (121 aa).

Belongs to the universal ribosomal protein uL18 family. Part of the 50S ribosomal subunit; part of the 5S rRNA/L5/L18/L25 subcomplex. Contacts the 5S and 23S rRNAs.

Functionally, this is one of the proteins that bind and probably mediate the attachment of the 5S RNA into the large ribosomal subunit, where it forms part of the central protuberance. This chain is Large ribosomal subunit protein uL18, found in Burkholderia multivorans (strain ATCC 17616 / 249).